Consider the following 274-residue polypeptide: Bis(5'-nucleosyl)-tetraphosphatase, symmetrical (274 aa).

Belongs to the Ap4A hydrolase family.

The catalysed reaction is P(1),P(4)-bis(5'-adenosyl) tetraphosphate + H2O = 2 ADP + 2 H(+). In terms of biological role, hydrolyzes diadenosine 5',5'''-P1,P4-tetraphosphate to yield ADP. This Janthinobacterium sp. (strain Marseille) (Minibacterium massiliensis) protein is Bis(5'-nucleosyl)-tetraphosphatase, symmetrical.